The chain runs to 350 residues: Arabinogalactan endo-beta-1,4-galactanase A (350 aa).

Positions 1–17 (MILSSLLPLSLVTLTSA) are cleaved as a signal peptide. N-linked (GlcNAc...) asparagine glycosylation is present at N129. Residue E153 is the Proton donor of the active site. The Nucleophile role is filled by E263.

This sequence belongs to the glycosyl hydrolase 53 family.

The protein localises to the secreted. It catalyses the reaction The enzyme specifically hydrolyzes (1-&gt;4)-beta-D-galactosidic linkages in type I arabinogalactans.. In terms of biological role, endogalactanase involved in the degradation of plant cell wall polysaccharides, and more particularly of hairy regions of pectin. The polypeptide is Arabinogalactan endo-beta-1,4-galactanase A (galA) (Emericella nidulans (strain FGSC A4 / ATCC 38163 / CBS 112.46 / NRRL 194 / M139) (Aspergillus nidulans)).